Reading from the N-terminus, the 83-residue chain is Sulfur carrier protein TusA (83 aa).

The active-site Cysteine persulfide intermediate is the C19.

Belongs to the sulfur carrier protein TusA family.

The protein localises to the cytoplasm. Functionally, sulfur carrier protein which probably makes part of a sulfur-relay system. This chain is Sulfur carrier protein TusA, found in Vibrio atlanticus (strain LGP32) (Vibrio splendidus (strain Mel32)).